We begin with the raw amino-acid sequence, 2523 residues long: Non-reducing polyketide synthase Preu3 (2523 aa).

An N-terminal acylcarrier protein transacylase domain (SAT) region spans residues 58–247 (LQSLASERRA…KILAMTGSFH (190 aa)). Positions 373–792 (DNAVAVVGMA…GSNGAMIVCQ (420 aa)) constitute a Ketosynthase family 3 (KS3) domain. Catalysis depends on for beta-ketoacyl synthase activity residues Cys539, His674, and His715. A malonyl-CoA:ACP transacylase (MAT) domain region spans residues 900-1207 (CFGGQVKAFV…KAFGSLADAT (308 aa)). Catalysis depends on Ser986, which acts as the For acyl/malonyl transferase activity. Residues 1271–1398 (HELLTFSSFE…GLVAFGGTVE (128 aa)) are N-terminal hotdog fold. The PKS/mFAS DH domain occupies 1271–1573 (HELLTFSSFE…FTRVTVPGLR (303 aa)). Residues 1301–1568 (LVKGHAVVAQ…ALGCRFTRVT (268 aa)) form a product template (PT) domain region. His1305 serves as the catalytic Proton acceptor; for dehydratase activity. Residues 1421–1573 (ECDALRGSAT…FTRVTVPGLR (153 aa)) are C-terminal hotdog fold. Catalysis depends on Asp1483, which acts as the Proton donor; for dehydratase activity. The segment at 1579–1601 (ANGDARAQERPSGSRISPSPLAP) is disordered. Residues 1639-1713 (VDYLAQVKAL…KLAEYLAKTL (75 aa)) form the Carrier domain. O-(pantetheine 4'-phosphoryl)serine is present on Ser1673. Residues 1735 to 1757 (DAEQSSDESPYDSTDDSASGYGD) are disordered. Over residues 1738–1749 (QSSDESPYDSTD) the composition is skewed to acidic residues. The segment at 1986–2085 (LEIGGGTGGT…MRQLLSSEGF (100 aa)) is methyltransferase (CMeT) domain. The segment at 2218 to 2520 (LILHGGGHVL…RALEWLVEQC (303 aa)) is thioesterase (TE) domain.

It depends on pantetheine 4'-phosphate as a cofactor.

The catalysed reaction is 3 malonyl-CoA + acetyl-CoA + S-adenosyl-L-methionine + H(+) = 3-methylorsellinate + S-adenosyl-L-homocysteine + 3 CO2 + 4 CoA. Non-reducing polyketide synthase; part of a gene cluster that mediates the biosynthesis of a yet unidentified natural product. The first step in the pathway is performed by Preu3 that condenses one acetyl-CoA starter unit with 3 malonyl-CoA units. Preu3 also catalyzes one methylation step to produce 3-methylorsellinate, an intermediate that exhibits significant antibacterial activities against methicillin-resistant Staphylococcus aureus, multidrug-resistant Enterococcus faecalis, multidrug-resistant Enterococcus faecium, and multidrug-resistant Staphylococcus epidermidis. The polypeptide is Non-reducing polyketide synthase Preu3 (Preussia isomera (Coprophilous fungus)).